A 659-amino-acid chain; its full sequence is Interferon-induced GTP-binding protein Mx1 (659 aa).

M1 is modified (N-acetylmethionine). The disordered stretch occupies residues 1-40 (MVNSKGEITDSDPGSNHLLLNGLPDKAGKNQDTEPENSLC). Positions 65 to 338 (DLALPAIAVI…LITHICKTLP (274 aa)) constitute a Dynamin-type G domain. Positions 75-82 (GDQSSGKS) are G1 motif. Residue 75-82 (GDQSSGKS) coordinates GTP. The interval 100–102 (VTR) is G2 motif. The interval 176 to 179 (DLPG) is G3 motif. Residues 176–180 (DLPGI) and 245–248 (TKPD) contribute to the GTP site. The G4 motif stretch occupies residues 245–248 (TKPD). Residues 277–280 (KCRG) are G5 motif. The segment at 339–364 (LLENQIKENHEKITEELKKYGSDVPE) is bundle signaling element (BSE). Positions 364–531 (EEEHEKMFFL…HFQMEQIVYC (168 aa)) are middle domain. The segment at 365-629 (EEHEKMFFLI…KDTYNWLLKE (265 aa)) is stalk. The critical for lipid-binding stretch occupies residues 552–555 (KNKK). Residues 571 to 659 (LSEIFEHLLA…ARRRLAKFPG (89 aa)) form the GED domain.

Belongs to the TRAFAC class dynamin-like GTPase superfamily. Dynamin/Fzo/YdjA family. As to quaternary structure, homooligomer. Oligomerizes into multimeric filamentous or ring-like structures by virtue of its stalk domain. Oligomerization is critical for GTPase activity, protein stability, and recognition of viral target structures. Interacts with TRPC1, TRPC3, TRPC4, TRPC5, TRPC6 and TRPC7. Interacts with HSPA5. Interacts with TUBB/TUBB5. Interacts with DDX39A and DDX39B. ISGylated.

It is found in the cytoplasm. Its subcellular location is the endoplasmic reticulum membrane. The protein localises to the perinuclear region. Functionally, interferon-induced dynamin-like GTPase with antiviral activity. The polypeptide is Interferon-induced GTP-binding protein Mx1 (MX1) (Phoca vitulina (Harbor seal)).